Consider the following 450-residue polypeptide: Perilipin-2 (450 aa).

Position 2 is an N-acetylalanine (Ala2). Ser215 bears the Phosphoserine mark. At Tyr232 the chain carries Phosphotyrosine. A disordered region spans residues 411 to 450; that stretch reads ESESAQAPGTTRRPGRWSRKHPKPVPVSNAEGSQPDDSSS. The segment covering 423–433 has biased composition (basic residues); the sequence is RPGRWSRKHPK. Polar residues predominate over residues 440–450; it reads AEGSQPDDSSS.

It belongs to the perilipin family. In terms of assembly, interacts with IRGC. In terms of processing, acylated; primarily with C14, C16 and C18 fatty acids. Post-translationally, phosphorylation at Tyr-232 by isoform 1 of CHKA (CHKalpha2) promotes dissociation from lipid droplets: dissociation is followed by recruitment of autophagosome machinery to lipid droplets and subsequent lipid droplet lipolysis. Polyubiquitination of Nt-acetylatable A-PLIN2 by MARCHF6 lead to degradation by 26S proteasomes. Milk lipid globules.

Its subcellular location is the membrane. It localises to the lipid droplet. In terms of biological role, structural component of lipid droplets, which is required for the formation and maintenance of lipid storage droplets. The protein is Perilipin-2 (PLIN2) of Bos taurus (Bovine).